The sequence spans 309 residues: Porphobilinogen deaminase (309 aa).

Residue cysteine 240 is modified to S-(dipyrrolylmethanemethyl)cysteine.

It belongs to the HMBS family. As to quaternary structure, monomer. Dipyrromethane is required as a cofactor.

The enzyme catalyses 4 porphobilinogen + H2O = hydroxymethylbilane + 4 NH4(+). It participates in porphyrin-containing compound metabolism; protoporphyrin-IX biosynthesis; coproporphyrinogen-III from 5-aminolevulinate: step 2/4. Its function is as follows. Tetrapolymerization of the monopyrrole PBG into the hydroxymethylbilane pre-uroporphyrinogen in several discrete steps. The chain is Porphobilinogen deaminase from Chromobacterium violaceum (strain ATCC 12472 / DSM 30191 / JCM 1249 / CCUG 213 / NBRC 12614 / NCIMB 9131 / NCTC 9757 / MK).